The chain runs to 825 residues: Breast cancer anti-estrogen resistance protein 3 homolog (825 aa).

The residue at position 2 (alanine 2) is an N-acetylalanine. Phosphoserine is present on residues serine 32, serine 78, serine 83, serine 182, and serine 290. A disordered region spans residues 40-84; it reads EAYPDVSIHGTLPRKKKGPPPIRSCDSASHMGTLPHSKSPRQSSP. Residues 154–253 enclose the SH2 domain; that stretch reads WYHGRIPRQV…QSGAIIFQPI (100 aa). The interval 300-320 is disordered; the sequence is DHSLPRGNLLRNKDKSGSQPA. Lysine 334 is subject to N6-methyllysine. Phosphoserine is present on residues serine 358, serine 363, and serine 375. An Omega-N-methylarginine modification is found at arginine 442. Serine 471 carries the post-translational modification Phosphoserine. Residues 548–818 form the Ras-GEF domain; it reads DARVIAQHML…TALSRKLEPP (271 aa). The mediates the interaction with BCAR1/p130CAS stretch occupies residues 744 to 748; sequence LATAR.

In terms of assembly, part of a complex comprised of PTPRA, BCAR1, BCAR3 and SRC; the formation of the complex is dependent on integrin mediated-tyrosine phosphorylation of PTPRA. Within the complex, interacts (via SH2 domain) with PTPRA (when phosphorylated on 'Tyr-792'). Interacts (via Ras-GEF domain) with BCAR1. Interacts (via Ras-GEF domain) with NEDD9. Interacts with PTK2/FAK1. Interacts with PTPN1. Interacts (via SH2 domain) with EGFR (when tyrosine-phosphorylated). In terms of processing, phosphorylated on tyrosine residues.

It localises to the cytoplasm. Its subcellular location is the cell junction. The protein localises to the focal adhesion. Functionally, acts as an adapter protein downstream of several growth factor receptors to promote cell proliferation, migration, and redistribution of actin fibers. Specifically involved in INS/insulin signaling pathway by mediating MAPK1/ERK2-MAPK3/ERK1 activation and DNA synthesis. Promotes insulin-mediated membrane ruffling. In response to vasoconstrictor peptide EDN1, involved in the activation of RAP1 downstream of PTK2B via interaction with phosphorylated BCAR1. Inhibits cell migration and invasion via regulation of TGFB-mediated matrix digestion, actin filament rearrangement, and inhibition of invadopodia activity. May inhibit TGFB/SMAD signaling, via facilitating BCAR1 and SMAD2 and/or SMAD3 interaction. Regulates EGF-induced DNA synthesis. Required for the maintenance of ocular lens morphology and structural integrity, potentially via regulation of focal adhesion complex signaling. Acts upstream of PTPRA to regulate the localization of BCAR1 and PTPRA to focal adhesions, via regulation of SRC-mediated phosphorylation of PTPRA. Positively regulates integrin-induced tyrosine phosphorylation of BCAR1. Acts as a guanine nucleotide exchange factor (GEF) for small GTPases RALA, RAP1A and RRAS. However, in a contrasting study, lacks GEF activity towards RAP1. The protein is Breast cancer anti-estrogen resistance protein 3 homolog of Rattus norvegicus (Rat).